Consider the following 337-residue polypeptide: UPF0284 protein AF_0276 (337 aa).

It belongs to the UPF0284 family.

In Archaeoglobus fulgidus (strain ATCC 49558 / DSM 4304 / JCM 9628 / NBRC 100126 / VC-16), this protein is UPF0284 protein AF_0276.